Here is a 366-residue protein sequence, read N- to C-terminus: Chorismate synthase (366 aa).

Arg-47 contributes to the NADP(+) binding site. FMN is bound by residues 124–126 (RSS), Gly-286, 301–305 (KPVAT), and Arg-327.

It belongs to the chorismate synthase family. As to quaternary structure, homotetramer. FMNH2 serves as cofactor.

The enzyme catalyses 5-O-(1-carboxyvinyl)-3-phosphoshikimate = chorismate + phosphate. It participates in metabolic intermediate biosynthesis; chorismate biosynthesis; chorismate from D-erythrose 4-phosphate and phosphoenolpyruvate: step 7/7. Catalyzes the anti-1,4-elimination of the C-3 phosphate and the C-6 proR hydrogen from 5-enolpyruvylshikimate-3-phosphate (EPSP) to yield chorismate, which is the branch point compound that serves as the starting substrate for the three terminal pathways of aromatic amino acid biosynthesis. This reaction introduces a second double bond into the aromatic ring system. The sequence is that of Chorismate synthase from Methylacidiphilum infernorum (isolate V4) (Methylokorus infernorum (strain V4)).